We begin with the raw amino-acid sequence, 200 residues long: ATP-dependent Clp protease proteolytic subunit (200 aa).

The active-site Nucleophile is the Ser101. The active site involves His126.

It belongs to the peptidase S14 family. In terms of assembly, component of the chloroplastic Clp protease core complex.

The protein localises to the plastid. Its subcellular location is the chloroplast stroma. It carries out the reaction Hydrolysis of proteins to small peptides in the presence of ATP and magnesium. alpha-casein is the usual test substrate. In the absence of ATP, only oligopeptides shorter than five residues are hydrolyzed (such as succinyl-Leu-Tyr-|-NHMec, and Leu-Tyr-Leu-|-Tyr-Trp, in which cleavage of the -Tyr-|-Leu- and -Tyr-|-Trp bonds also occurs).. In terms of biological role, cleaves peptides in various proteins in a process that requires ATP hydrolysis. Has a chymotrypsin-like activity. Plays a major role in the degradation of misfolded proteins. This chain is ATP-dependent Clp protease proteolytic subunit, found in Adiantum capillus-veneris (Maidenhair fern).